Reading from the N-terminus, the 236-residue chain is Small ribosomal subunit protein uS2c (236 aa).

This sequence belongs to the universal ribosomal protein uS2 family.

Its subcellular location is the plastid. The polypeptide is Small ribosomal subunit protein uS2c (rps2) (Cuscuta exaltata (Tall dodder)).